A 372-amino-acid chain; its full sequence is N-methyl-L-tryptophan oxidase (372 aa).

FAD is bound at residue 4–34 (DLIIIGSGSVGAAAGYYATRAGLNVLMTDAH). C308 carries the S-8alpha-FAD cysteine modification.

This sequence belongs to the MSOX/MTOX family. MTOX subfamily. As to quaternary structure, monomer. It depends on FAD as a cofactor.

The catalysed reaction is N(alpha)-methyl-L-tryptophan + O2 + H2O = L-tryptophan + formaldehyde + H2O2. In terms of biological role, catalyzes the oxidative demethylation of N-methyl-L-tryptophan. The sequence is that of N-methyl-L-tryptophan oxidase from Escherichia coli O1:K1 / APEC.